We begin with the raw amino-acid sequence, 132 residues long: UPF0299 membrane protein YohJ (132 aa).

The Periplasmic portion of the chain corresponds to 1 to 6 (MSKTLN). A helical transmembrane segment spans residues 7–27 (IIWQYLRAFVLIYACLYAGIF). At 28–30 (IAS) the chain is on the cytoplasmic side. The chain crosses the membrane as a helical span at residues 31-51 (LLPVTIPGSIIGMLILFVLLA). Topologically, residues 52–62 (LQILPAKWVNP) are periplasmic. Residues 63 to 83 (GCYVLIRYMALLFVPIGVGVM) form a helical membrane-spanning segment. The Cytoplasmic portion of the chain corresponds to 84 to 92 (QYFDLLRAQ). A helical membrane pass occupies residues 93–113 (FGPVVVSCAISTLVVFLVVSW). The Periplasmic segment spans residues 114–132 (SSQLVHGERKVVGQKGSEE).

It belongs to the UPF0299 family.

It is found in the cell inner membrane. This chain is UPF0299 membrane protein YohJ (yohJ), found in Escherichia coli O157:H7.